Consider the following 43-residue polypeptide: Thymosin beta-b (43 aa).

Composition is skewed to basic and acidic residues over residues 1-25 (MADK…ETQE) and 33-43 (ETIEQEKQCEA). The interval 1–43 (MADKPDISEVSQFDKTKLKKTETQEKNTLPTKETIEQEKQCEA) is disordered.

Belongs to the thymosin beta family.

The protein resides in the cytoplasm. The protein localises to the cytoskeleton. Functionally, plays an important role in the organization of the cytoskeleton. Binds to and sequesters actin monomers (G actin) and therefore inhibits actin polymerization. This chain is Thymosin beta-b, found in Cyprinus carpio (Common carp).